The sequence spans 485 residues: Aspartyl protease family protein 2 (485 aa).

Positions 1–23 (MVGRRKALLFSLCFFFLSLPSFS) are cleaved as a signal peptide. Residues 43-71 (PVSFQPDSDSESLLESEFESGSDSESSSS) form a disordered region. Acidic residues predominate over residues 50-64 (SDSESLLESEFESGS). Residues 142 to 480 (YFTRLGVGTP…DLASSRVGFA (339 aa)) enclose the Peptidase A1 domain. Active-site residues include Asp160 and Asp365.

It belongs to the peptidase A1 family.

Aspartyl protease. Not able to cleave BAG6. This Arabidopsis thaliana (Mouse-ear cress) protein is Aspartyl protease family protein 2.